A 525-amino-acid polypeptide reads, in one-letter code: GMP synthase [glutamine-hydrolyzing] (525 aa).

The 199-residue stretch at 9–207 (RILILDFGSQ…VLDICGCAAL (199 aa)) folds into the Glutamine amidotransferase type-1 domain. Cys86 acts as the Nucleophile in catalysis. Active-site residues include His181 and Glu183. The region spanning 208 to 400 (WTPSNIVDDA…LGLPYDMVYR (193 aa)) is the GMPS ATP-PPase domain. 235–241 (SGGVDSS) is an ATP binding site.

Homodimer.

The enzyme catalyses XMP + L-glutamine + ATP + H2O = GMP + L-glutamate + AMP + diphosphate + 2 H(+). It participates in purine metabolism; GMP biosynthesis; GMP from XMP (L-Gln route): step 1/1. Its function is as follows. Catalyzes the synthesis of GMP from XMP. The chain is GMP synthase [glutamine-hydrolyzing] from Pseudomonas aeruginosa (strain UCBPP-PA14).